Reading from the N-terminus, the 275-residue chain is 3-methyl-2-oxobutanoate hydroxymethyltransferase (275 aa).

Mg(2+) is bound by residues D55 and D94. Residues 55–56, D94, and K122 contribute to the 3-methyl-2-oxobutanoate site; that span reads DS. E124 provides a ligand contact to Mg(2+). The active-site Proton acceptor is the E191.

Belongs to the PanB family. Homodecamer; pentamer of dimers. Requires Mg(2+) as cofactor.

It is found in the cytoplasm. It catalyses the reaction 3-methyl-2-oxobutanoate + (6R)-5,10-methylene-5,6,7,8-tetrahydrofolate + H2O = 2-dehydropantoate + (6S)-5,6,7,8-tetrahydrofolate. It functions in the pathway cofactor biosynthesis; (R)-pantothenate biosynthesis; (R)-pantoate from 3-methyl-2-oxobutanoate: step 1/2. In terms of biological role, catalyzes the reversible reaction in which hydroxymethyl group from 5,10-methylenetetrahydrofolate is transferred onto alpha-ketoisovalerate to form ketopantoate. The chain is 3-methyl-2-oxobutanoate hydroxymethyltransferase from Marinomonas sp. (strain MWYL1).